Consider the following 953-residue polypeptide: Translation initiation factor IF-2 (953 aa).

2 disordered regions span residues 48–240 (SSFS…AQQE) and 279–363 (TKLK…TERK). 3 stretches are compositionally biased toward basic and acidic residues: residues 80–89 (TGSEHVEKTQ), 98–111 (FKAE…EQAA), and 140–188 (QGDK…ENHK). Over residues 191–207 (RFTNQKKQGRQEPQSKS) the composition is skewed to polar residues. The span at 229–240 (RQSETRFRAQQE) shows a compositional bias: basic and acidic residues. Over residues 282–291 (KSSNISAKST) the composition is skewed to polar residues. Over residues 300 to 317 (ARPEKNRELTHHSQEGQK) the composition is skewed to basic and acidic residues. A compositionally biased stretch (low complexity) spans 322 to 338 (SWNSQNQVRNQKNSNWN). A compositionally biased stretch (basic residues) spans 339–348 (KNKKTKKGKN). Residues 454 to 623 (ERAPVVTIMG…LLVAEVEELK (170 aa)) form the tr-type G domain. Positions 463-470 (GHVDHGKT) are G1. Residue 463–470 (GHVDHGKT) participates in GTP binding. The segment at 488-492 (GITQH) is G2. Residues 509 to 512 (DTPG) are G3. Residues 509–513 (DTPGH) and 563–566 (NKID) contribute to the GTP site. Residues 563 to 566 (NKID) form a G4 region. Residues 599–601 (SAK) are G5.

Belongs to the TRAFAC class translation factor GTPase superfamily. Classic translation factor GTPase family. IF-2 subfamily.

The protein resides in the cytoplasm. One of the essential components for the initiation of protein synthesis. Protects formylmethionyl-tRNA from spontaneous hydrolysis and promotes its binding to the 30S ribosomal subunits. Also involved in the hydrolysis of GTP during the formation of the 70S ribosomal complex. This Streptococcus pyogenes serotype M1 protein is Translation initiation factor IF-2.